The sequence spans 152 residues: Toxin Res (152 aa).

This sequence belongs to the MbcT/ParT/Res family. As to quaternary structure, homodimer. Forms a complex with cognate antitoxin Xre.

Its function is as follows. Toxic component of a type II toxin-antitoxin (TA) system. Expression in E.coli inhibits cell growth; bacteriostasis is neutralized by expression of cognate antitoxin Xre. Probably depletes intracellular NAD(+). This chain is Toxin Res, found in Yersinia enterocolitica serotype O:8 / biotype 1B (strain NCTC 13174 / 8081).